A 638-amino-acid chain; its full sequence is Sodium- and chloride-dependent glycine transporter 1 (638 aa).

The disordered stretch occupies residues 1–29; sequence MAAAQGPVAPSSLEQNGAVPSEATKKDQN. Topologically, residues 1–40 are cytoplasmic; that stretch reads MAAAQGPVAPSSLEQNGAVPSEATKKDQNLKRGNWGNQIE. Transmembrane regions (helical) follow at residues 41-61, 69-88, and 112-132; these read FVLTSVGYAVGLGNVWRFPYL, AFMFPYFIMLIFCGIPLFFM, and GVGYGMMVVSTYIGIYYNVVI. The Extracellular segment spans residues 133–219; it reads CIAFYYFFSS…DDIGNFGEVR (87 aa). N-linked (GlcNAc...) asparagine glycosylation is found at N169, N172, N182, and N188. 9 helical membrane-spanning segments follow: residues 220–238, 247–264, 300–317, 329–350, 383–402, 431–449, 465–485, 506–525, and 544–562; these read LPLLGCLGVSWVVVFLCLI, VVYFTATFPYVVLTILFI, IFYSLGCAWGGLVTMASY, VIISITNCATSVYAGFVIFSIL, LPISPLWSLLFFFMLILLGL, YVTLGVAVAGFLLGIPLTS, SFSLVIISCIMCVSIMYIYGH, ICWRFVSPAIIFFILIFSVI, and IGFLMALSSVICIPLYALF. At 563-638 the chain is on the cytoplasmic side; it reads QFCRTDGDTL…GSSRFQDSRI (76 aa). The segment at 597–638 is disordered; that stretch reads RYAPTTTPSPEDGLEVQPLHPDKAQIPMVGSNGSSRFQDSRI. At T603 the chain carries Phosphothreonine. Phosphoserine occurs at positions 605 and 630. The segment at 627–638 is essential for interaction with EXOC1; the sequence is SNGSSRFQDSRI. Residues 627–638 show a composition bias toward polar residues; the sequence is SNGSSRFQDSRI.

It belongs to the sodium:neurotransmitter symporter (SNF) (TC 2.A.22) family. SLC6A9 subfamily. As to quaternary structure, interacts with EXOC1; interaction increases the transporter capacity of SLC6A9 probably by promoting its insertion into the cell membrane. Interacts with EXOC3 and EXOC4.

It localises to the cell membrane. The catalysed reaction is glycine(out) + chloride(out) + 2 Na(+)(out) = glycine(in) + chloride(in) + 2 Na(+)(in). Sodium- and chloride-dependent glycine transporter which is essential for regulating glycine concentrations at inhibitory glycinergic synapses. The sequence is that of Sodium- and chloride-dependent glycine transporter 1 (SLC6A9) from Bos taurus (Bovine).